Consider the following 59-residue polypeptide: Large ribosomal subunit protein uL30 (59 aa).

The protein belongs to the universal ribosomal protein uL30 family. Part of the 50S ribosomal subunit.

This is Large ribosomal subunit protein uL30 from Solidesulfovibrio magneticus (strain ATCC 700980 / DSM 13731 / RS-1) (Desulfovibrio magneticus).